The sequence spans 161 residues: Ribonuclease H (161 aa).

In terms of domain architecture, RNase H type-1 spans 5–149 (EKLAIAAATD…VDAIAVAFSK (145 aa)). Residues Asp14, Glu53, Asp78, and Asp141 each contribute to the Mg(2+) site.

Belongs to the RNase H family. Monomer. The cofactor is Mg(2+).

Its subcellular location is the cytoplasm. It carries out the reaction Endonucleolytic cleavage to 5'-phosphomonoester.. In terms of biological role, endonuclease that specifically degrades the RNA of RNA-DNA hybrids. This chain is Ribonuclease H, found in Prochlorococcus marinus (strain NATL1A).